Here is a 373-residue protein sequence, read N- to C-terminus: MACNSTPMGTYEHLLLNVSNTLDPGDTPLSAPLRISLAIMMLLMIVVGFLGNTVVCIIVYQRPAMRSAINLLLATLAFSDIMLSLCCMPFTAITLITVRWHFGDHFCRLSATLYWFFVLEGVAILLIISVDRFLIIVQRQDKLNPRRAKMIIAASWVLSFCISAPSFTGWTFMEVPARAPQCVLGYTEFPAERAYVVTLVVAVFFAPFGVMLCSYLCILNTVRKNAVRVHNQSDSLDLRQLTGAGLRRLRRQQQQASLDLSFKTKAFTTILILFVGFSLCWLPHSVYSLLSAFSRRFYYSASFYTTSTCVLWLSYLKSVFNPIVYCWRIKKFREACIELLPHTFQILPKVPERIQRKIQPSTIYVCNENQSAV.

Residues 1-38 (MACNSTPMGTYEHLLLNVSNTLDPGDTPLSAPLRISLA) lie on the Extracellular side of the membrane. Asn-17 is a glycosylation site (N-linked (GlcNAc...) asparagine). The chain crosses the membrane as a helical span at residues 39-59 (IMMLLMIVVGFLGNTVVCIIV). Topologically, residues 60 to 75 (YQRPAMRSAINLLLAT) are cytoplasmic. Residues 76–96 (LAFSDIMLSLCCMPFTAITLI) traverse the membrane as a helical segment. At 97-109 (TVRWHFGDHFCRL) the chain is on the extracellular side. A helical transmembrane segment spans residues 110-130 (SATLYWFFVLEGVAILLIISV). The Cytoplasmic segment spans residues 131 to 149 (DRFLIIVQRQDKLNPRRAK). A helical membrane pass occupies residues 150–170 (MIIAASWVLSFCISAPSFTGW). Over 171-198 (TFMEVPARAPQCVLGYTEFPAERAYVVT) the chain is Extracellular. A helical membrane pass occupies residues 199–219 (LVVAVFFAPFGVMLCSYLCIL). The Cytoplasmic segment spans residues 220-269 (NTVRKNAVRVHNQSDSLDLRQLTGAGLRRLRRQQQQASLDLSFKTKAFTT). A helical membrane pass occupies residues 270–290 (ILILFVGFSLCWLPHSVYSLL). Residues 291-306 (SAFSRRFYYSASFYTT) are Extracellular-facing. The helical transmembrane segment at 307–327 (STCVLWLSYLKSVFNPIVYCW) threads the bilayer. Residues 328 to 373 (RIKKFREACIELLPHTFQILPKVPERIQRKIQPSTIYVCNENQSAV) are Cytoplasmic-facing.

This sequence belongs to the G-protein coupled receptor 1 family. In terms of tissue distribution, brain specific.

It is found in the cell membrane. Orphan receptor. May play a role in brain function. This is Probable G-protein coupled receptor 45 (Gpr45) from Mus musculus (Mouse).